A 127-amino-acid chain; its full sequence is Lymphocyte antigen 6D (127 aa).

An N-terminal signal peptide occupies residues 1–20; sequence MKTALLVLLVLAVATSPAWA. A UPAR/Ly6 domain is found at 21–108; that stretch reads LRCHVCTNSA…AAPGHALLSS (88 aa). Intrachain disulfides connect Cys23–Cys45, Cys26–Cys32, Cys38–Cys63, Cys67–Cys86, and Cys87–Cys92. A lipid anchor (GPI-anchor amidated serine) is attached at Ser98. The propeptide at 99-127 is removed in mature form; sequence AAPGHALLSSVTLGLATSLSLLTVMALCL.

As to expression, lymphoid cells lacking Ly6d, called ALP (all-lymphoid progenitor), retain full lymphoid potential and early thymic seeding activity, whereas cells containing Ly6d, called BLP (B-cell-biased lymphoid progenitor), up-regulate the B-cell specifying factors Ebf1 and Pax5 and behave essentially as B-cell progenitors (at protein level). Thymocytes and B-cells.

The protein resides in the cell membrane. Its function is as follows. May act as a specification marker at earliest stage specification of lymphocytes between B- and T-cell development. Marks the earliest stage of B-cell specification. The protein is Lymphocyte antigen 6D (Ly6d) of Mus musculus (Mouse).